A 92-amino-acid polypeptide reads, in one-letter code: Small ribosomal subunit protein bS18c (92 aa).

It belongs to the bacterial ribosomal protein bS18 family. As to quaternary structure, part of the 30S ribosomal subunit.

Its subcellular location is the plastid. The sequence is that of Small ribosomal subunit protein bS18c (rps18) from Epifagus virginiana (Beechdrops).